The primary structure comprises 89 residues: Small ribosomal subunit protein bS20 (89 aa).

2 disordered regions span residues 1–25 (MANI…ASMK) and 69–89 (KNAA…IQAS). Positions 7–20 (AIKRAKTSEKRRAH) are enriched in basic residues.

It belongs to the bacterial ribosomal protein bS20 family.

Its function is as follows. Binds directly to 16S ribosomal RNA. The polypeptide is Small ribosomal subunit protein bS20 (Geobacillus thermodenitrificans (strain NG80-2)).